We begin with the raw amino-acid sequence, 606 residues long: Aspartate--tRNA(Asp/Asn) ligase (606 aa).

Glutamate 177 serves as a coordination point for L-aspartate. The segment at 201-204 (QIFK) is aspartate. Arginine 223 contributes to the L-aspartate binding site. Residues 223-225 (RDE) and glutamine 232 each bind ATP. Histidine 461 contributes to the L-aspartate binding site. Glutamate 499 contacts ATP. Arginine 506 is an L-aspartate binding site. 551–554 (GLDR) lines the ATP pocket.

Belongs to the class-II aminoacyl-tRNA synthetase family. Type 1 subfamily. Homodimer.

It is found in the cytoplasm. It carries out the reaction tRNA(Asx) + L-aspartate + ATP = L-aspartyl-tRNA(Asx) + AMP + diphosphate. Its function is as follows. Aspartyl-tRNA synthetase with relaxed tRNA specificity since it is able to aspartylate not only its cognate tRNA(Asp) but also tRNA(Asn). Reaction proceeds in two steps: L-aspartate is first activated by ATP to form Asp-AMP and then transferred to the acceptor end of tRNA(Asp/Asn). The sequence is that of Aspartate--tRNA(Asp/Asn) ligase from Prochlorococcus marinus (strain MIT 9211).